A 161-amino-acid chain; its full sequence is Endoribonuclease YbeY (161 aa).

Zn(2+) is bound by residues histidine 121, histidine 125, and histidine 131.

This sequence belongs to the endoribonuclease YbeY family. Requires Zn(2+) as cofactor.

It localises to the cytoplasm. In terms of biological role, single strand-specific metallo-endoribonuclease involved in late-stage 70S ribosome quality control and in maturation of the 3' terminus of the 16S rRNA. In Xanthomonas euvesicatoria pv. vesicatoria (strain 85-10) (Xanthomonas campestris pv. vesicatoria), this protein is Endoribonuclease YbeY.